Consider the following 427-residue polypeptide: Tol-Pal system protein TolB (427 aa).

An N-terminal signal peptide occupies residues 1-25; the sequence is MKTFAQLRLLLAAAALALLSFSAQA.

It belongs to the TolB family. In terms of assembly, the Tol-Pal system is composed of five core proteins: the inner membrane proteins TolA, TolQ and TolR, the periplasmic protein TolB and the outer membrane protein Pal. They form a network linking the inner and outer membranes and the peptidoglycan layer.

It localises to the periplasm. Its function is as follows. Part of the Tol-Pal system, which plays a role in outer membrane invagination during cell division and is important for maintaining outer membrane integrity. This chain is Tol-Pal system protein TolB, found in Azoarcus sp. (strain BH72).